Here is a 229-residue protein sequence, read N- to C-terminus: Uridylate cyclase (229 aa).

The Guanylate cyclase domain maps to 47–178 (TVLYADLDGS…RAANYAAKLT (132 aa)). Residue Tyr50 participates in a ribonucleoside 5'-triphosphate binding. 2 residues coordinate Mn(2+): Asp52 and Asp96. Residue Arg97 coordinates a ribonucleoside 5'-triphosphate.

Belongs to the adenylyl cyclase class-4/guanylyl cyclase family. Pyrimidine cyclase subfamily. Homodimer. Mn(2+) is required as a cofactor.

The protein resides in the cytoplasm. It catalyses the reaction UTP = 3',5'-cyclic UMP + diphosphate. Its function is as follows. Pycsar (pyrimidine cyclase system for antiphage resistance) provides immunity against bacteriophage. The pyrimidine cyclase (PycC) synthesizes cyclic nucleotides in response to infection; these serve as specific second messenger signals. The signals activate the adjacent effector, leading to bacterial cell death and abortive phage infection. A clade B Pycsar system. In terms of biological role, the pyrimidine cyclase gene of a two-gene Pycsar system, generates cyclic UMP (cUMP) from UTP, has little to no activity on ATP, CTP or GTP. Expression of this and adjacent effector BcPycTIR (AC A0A0J5WTU0) probably confers resistance to bacteriophage. The genes are probably only expressed in response to bacteriophage infection. This Burkholderia cepacia (Pseudomonas cepacia) protein is Uridylate cyclase.